Reading from the N-terminus, the 194-residue chain is Imidazoleglycerol-phosphate dehydratase (194 aa).

This sequence belongs to the imidazoleglycerol-phosphate dehydratase family.

The protein resides in the cytoplasm. The enzyme catalyses D-erythro-1-(imidazol-4-yl)glycerol 3-phosphate = 3-(imidazol-4-yl)-2-oxopropyl phosphate + H2O. The protein operates within amino-acid biosynthesis; L-histidine biosynthesis; L-histidine from 5-phospho-alpha-D-ribose 1-diphosphate: step 6/9. This is Imidazoleglycerol-phosphate dehydratase from Listeria monocytogenes serotype 4a (strain HCC23).